A 205-amino-acid chain; its full sequence is Outer-membrane lipoprotein LolB (205 aa).

An N-terminal signal peptide occupies residues 1 to 17 (MFLRHCITFTLIALLAG). Cys-18 carries N-palmitoyl cysteine lipidation. A lipid anchor (S-diacylglycerol cysteine) is attached at Cys-18.

Belongs to the LolB family. In terms of assembly, monomer.

The protein resides in the cell outer membrane. Its function is as follows. Plays a critical role in the incorporation of lipoproteins in the outer membrane after they are released by the LolA protein. The protein is Outer-membrane lipoprotein LolB of Pseudomonas putida (strain ATCC 47054 / DSM 6125 / CFBP 8728 / NCIMB 11950 / KT2440).